We begin with the raw amino-acid sequence, 251 residues long: Ubiquinone biosynthesis O-methyltransferase (251 aa).

4 residues coordinate S-adenosyl-L-methionine: arginine 36, glycine 61, aspartate 82, and isoleucine 124.

The protein belongs to the methyltransferase superfamily. UbiG/COQ3 family.

The enzyme catalyses a 3-demethylubiquinol + S-adenosyl-L-methionine = a ubiquinol + S-adenosyl-L-homocysteine + H(+). It carries out the reaction a 3-(all-trans-polyprenyl)benzene-1,2-diol + S-adenosyl-L-methionine = a 2-methoxy-6-(all-trans-polyprenyl)phenol + S-adenosyl-L-homocysteine + H(+). Its pathway is cofactor biosynthesis; ubiquinone biosynthesis. Its function is as follows. O-methyltransferase that catalyzes the 2 O-methylation steps in the ubiquinone biosynthetic pathway. The protein is Ubiquinone biosynthesis O-methyltransferase of Rickettsia akari (strain Hartford).